Reading from the N-terminus, the 519-residue chain is MDKRKQSDYDNGKSKPTNGSKTTKFNLIKIIIRNLLIGILLMLVLNTIRFTSKQPKVEILSPDHIDSFTTLSDIELAQRLAKATTFKTISFGESDEFDQYEPEFLKFHEFLKITFPKVHKYLKLNIIANYSLVYNWKGLDESLKPILLAGHIDVVPTLFLDKWTHPPFSGHIDDTYIWGRGTMDDKGSVMAILESVEDLLSQGFKPQRSIYFAFGHDEELGGNNGAFNINKYFDTNEIGPFEFILDEGLPILLPPVFPGLSKPIASVGITEKGAIDIKLSVTIVGGHSSMPRRESAIGVLAQAVSKLENNPPSPKLRETRLLFDFVGRECSLPYRFLFSNLWLFEPIISRVLSTKPTLDALQRTTTALTIFNAGNKANVIPMEANATINFRVVPGDSTNDIIDHVNRVINDDRVKISKISNIIEPAPVSSTTSKSFNLLQSTILQEFPDVVVAPTIMIANTDTRHYWNLTENIFRFCPMVLENSDLQRLHGIDERLTIKNYKQLVDFYYHLIKNTEKYL.

Residues 25–45 (FNLIKIIIRNLLIGILLMLVL) traverse the membrane as a helical segment. Residue His-151 participates in Zn(2+) binding. The active site involves Asp-153. Asp-184 contributes to the Zn(2+) binding site. Catalysis depends on Glu-218, which acts as the Proton acceptor. Residues Glu-219, Asp-246, and His-490 each contribute to the Zn(2+) site.

It belongs to the peptidase M20A family. Zn(2+) serves as cofactor.

It localises to the membrane. This is Probable carboxypeptidase S-like 2 from Dictyostelium discoideum (Social amoeba).